A 429-amino-acid chain; its full sequence is UPF0597 protein AHA_1619 (429 aa).

It belongs to the UPF0597 family.

The polypeptide is UPF0597 protein AHA_1619 (Aeromonas hydrophila subsp. hydrophila (strain ATCC 7966 / DSM 30187 / BCRC 13018 / CCUG 14551 / JCM 1027 / KCTC 2358 / NCIMB 9240 / NCTC 8049)).